The chain runs to 135 residues: ATP synthase epsilon chain (135 aa).

This sequence belongs to the ATPase epsilon chain family. F-type ATPases have 2 components, CF(1) - the catalytic core - and CF(0) - the membrane proton channel. CF(1) has five subunits: alpha(3), beta(3), gamma(1), delta(1), epsilon(1). CF(0) has three main subunits: a, b and c.

The protein resides in the cell inner membrane. In terms of biological role, produces ATP from ADP in the presence of a proton gradient across the membrane. This is ATP synthase epsilon chain from Bradyrhizobium sp. (strain BTAi1 / ATCC BAA-1182).